Reading from the N-terminus, the 502-residue chain is 2,3-bisphosphoglycerate-independent phosphoglycerate mutase (502 aa).

Mn(2+)-binding residues include Asp13 and Ser63. Ser63 serves as the catalytic Phosphoserine intermediate. Substrate is bound by residues His117, 146–147 (RD), Arg177, Arg183, 251–254 (RSDR), and Lys324. Positions 389, 393, 430, 431, and 448 each coordinate Mn(2+).

This sequence belongs to the BPG-independent phosphoglycerate mutase family. Monomer. It depends on Mn(2+) as a cofactor.

It carries out the reaction (2R)-2-phosphoglycerate = (2R)-3-phosphoglycerate. It functions in the pathway carbohydrate degradation; glycolysis; pyruvate from D-glyceraldehyde 3-phosphate: step 3/5. Its function is as follows. Catalyzes the interconversion of 2-phosphoglycerate and 3-phosphoglycerate. The protein is 2,3-bisphosphoglycerate-independent phosphoglycerate mutase of Ureaplasma urealyticum serovar 10 (strain ATCC 33699 / Western).